Reading from the N-terminus, the 299-residue chain is tRNA pseudouridine synthase B (299 aa).

Catalysis depends on Asp-39, which acts as the Nucleophile.

Belongs to the pseudouridine synthase TruB family. Type 1 subfamily.

It catalyses the reaction uridine(55) in tRNA = pseudouridine(55) in tRNA. Responsible for synthesis of pseudouridine from uracil-55 in the psi GC loop of transfer RNAs. In Syntrophomonas wolfei subsp. wolfei (strain DSM 2245B / Goettingen), this protein is tRNA pseudouridine synthase B.